Reading from the N-terminus, the 162-residue chain is Probable chemoreceptor glutamine deamidase CheD (162 aa).

Belongs to the CheD family.

The enzyme catalyses L-glutaminyl-[protein] + H2O = L-glutamyl-[protein] + NH4(+). In terms of biological role, probably deamidates glutamine residues to glutamate on methyl-accepting chemotaxis receptors (MCPs), playing an important role in chemotaxis. This chain is Probable chemoreceptor glutamine deamidase CheD, found in Clostridium botulinum (strain Alaska E43 / Type E3).